Reading from the N-terminus, the 463-residue chain is MAEHHYDVVVIGAGPSGEGAAMNAAKHNRRVAIIEDKPTVGGNCTHWGTIPSKALRHSVKQIITFNTNQMFRDIGEPRWFSFPRVLQNAQKVIGKQVKLRTQFYSRNRVDLINGRAAFVDKHRLEIRGNKSVETIHFKQAIIATGSRPYLPPDVDFRHHRIYNSDSILNLSHTPRTLIIYGAGVIGSEYASIFAGLGVKVDLINPGSRLLSFLDDEISDALSYHLRNNGVLVRHNEQYESVKGDDHGVVLSLQSGKKIRADAFLWCNGRSGNTENLGLENVGLTPNSRGQLAVDEHYRTEVEHIYAAGDVIGWPSLASAAYDQGRAASSDITQDEYFRFVDDVPTGIYTIPEISSVGKTERELTEAKVPYDVGQAFFKDLARAQITGEAVGMLKILFHRETREILGIHCFGDQAAEIVHIGQAIMNQEGEANSLNYFINTTFNYPTMAEAYRVAALNGLNRIF.

35 to 44 (EDKPTVGGNC) serves as a coordination point for FAD.

The protein belongs to the class-I pyridine nucleotide-disulfide oxidoreductase family. FAD is required as a cofactor.

Its subcellular location is the cytoplasm. The enzyme catalyses NAD(+) + NADPH = NADH + NADP(+). Functionally, conversion of NADPH, generated by peripheral catabolic pathways, to NADH, which can enter the respiratory chain for energy generation. The chain is Soluble pyridine nucleotide transhydrogenase from Marinobacter nauticus (strain ATCC 700491 / DSM 11845 / VT8) (Marinobacter aquaeolei).